The following is a 76-amino-acid chain: Exodeoxyribonuclease 7 small subunit (76 aa).

Belongs to the XseB family. In terms of assembly, heterooligomer composed of large and small subunits.

The protein resides in the cytoplasm. It catalyses the reaction Exonucleolytic cleavage in either 5'- to 3'- or 3'- to 5'-direction to yield nucleoside 5'-phosphates.. Bidirectionally degrades single-stranded DNA into large acid-insoluble oligonucleotides, which are then degraded further into small acid-soluble oligonucleotides. The polypeptide is Exodeoxyribonuclease 7 small subunit (Bacillus cereus (strain ATCC 14579 / DSM 31 / CCUG 7414 / JCM 2152 / NBRC 15305 / NCIMB 9373 / NCTC 2599 / NRRL B-3711)).